The primary structure comprises 162 residues: Phenazine biosynthesis protein PhzB1 (162 aa).

Belongs to the PhzA/PhzB family. Homodimer.

Its pathway is antibiotic biosynthesis; phenazine biosynthesis. Involved in the biosynthesis of the antibiotic phenazine, a nitrogen-containing heterocyclic molecule. PhzB1 (operon phzA1B1C1E1F1G1) has a role in the biosynthesis of the phenazine during planktonic growth. In Pseudomonas aeruginosa (strain ATCC 15692 / DSM 22644 / CIP 104116 / JCM 14847 / LMG 12228 / 1C / PRS 101 / PAO1), this protein is Phenazine biosynthesis protein PhzB1.